Reading from the N-terminus, the 441-residue chain is MSNVTHQPKIGFVSLGCPKNLVDSERILTELRTEGYDVVPRYDDADMVIVNTCGFIDSAVQESLEAIGEALNENGKVIVTGCLGAKEDQIREVHPKVLEITGPHSYEQVLQHVHHYVPKPKHNPFLSLVPEQGVKLTPRHYAYLKISEGCNHRCTFCIIPSMRGDLVSRPIGDVLSEAKRLVDAGVKEILVISQDTSAYGVDVKHRTGFHNGEPVKTSMVSLCEQLSKLGVWTRLHYVYPYPHVDDVIPLMAEGKILPYLDIPLQHASPRILKLMKRPGSVDRQLARIKQWREICPELTLRSTFIVGFPGETEEDFQMLLDFLKEARLDRVGCFKYSPVEGAGANELPDQVPEEVKEERWNRFMQLQQQISAERLQEKVGREILVIVDEVDEEGAIGRSMADAPEIDGAVYLNGETNVKLGDIVRVKVENADEYDLWGSRV.

Positions 8–118 constitute an MTTase N-terminal domain; sequence PKIGFVSLGC…VLQHVHHYVP (111 aa). The [4Fe-4S] cluster site is built by C17, C53, C82, C150, C154, and C157. Residues 136–373 enclose the Radical SAM core domain; the sequence is LTPRHYAYLK…MQLQQQISAE (238 aa). A TRAM domain is found at 376 to 441; it reads QEKVGREILV…DEYDLWGSRV (66 aa).

This sequence belongs to the methylthiotransferase family. RimO subfamily. It depends on [4Fe-4S] cluster as a cofactor.

It is found in the cytoplasm. It carries out the reaction L-aspartate(89)-[ribosomal protein uS12]-hydrogen + (sulfur carrier)-SH + AH2 + 2 S-adenosyl-L-methionine = 3-methylsulfanyl-L-aspartate(89)-[ribosomal protein uS12]-hydrogen + (sulfur carrier)-H + 5'-deoxyadenosine + L-methionine + A + S-adenosyl-L-homocysteine + 2 H(+). In terms of biological role, catalyzes the methylthiolation of an aspartic acid residue of ribosomal protein uS12. The protein is Ribosomal protein uS12 methylthiotransferase RimO of Salmonella paratyphi A (strain ATCC 9150 / SARB42).